Reading from the N-terminus, the 424-residue chain is 5,5'-dehydrodivanillate O-demethylase oxygenase subunit (424 aa).

Residues 27–135 (WHPIGGESEF…VRALGGLLWA (109 aa)) enclose the Rieske domain. Positions 68, 70, 87, and 90 each coordinate [2Fe-2S] cluster. The Fe cation site is built by His181, His186, and Asp306.

Belongs to the bacterial ring-hydroxylating dioxygenase alpha subunit family. As to quaternary structure, homotrimer. The three-component monooxygenase is composed of an oxygenase (LigXa), a ferredoxin (LigXc) and a ferredoxin reductase (LigXd). Requires [2Fe-2S] cluster as cofactor. Fe cation serves as cofactor.

The enzyme catalyses 5,5'-dehydrodivanillate + NADH + O2 + H(+) = 2,2',3-trihydroxy-3'-methoxy-5,5'-dicarboxybiphenyl + formaldehyde + NAD(+) + H2O. Functionally, involved in the catabolism of 5,5'-dehydrodivanillate (DDVA), an intermediate in the biodegradation of lignin. Part of a three-component monooxygenase that catalyzes the O-demethylation of DDVA, leading to the formation of 2,2',3-trihydroxy-3'-methoxy-5,5'-dicarboxybiphenyl (OH-DDVA). This chain is 5,5'-dehydrodivanillate O-demethylase oxygenase subunit, found in Sphingobium sp. (strain NBRC 103272 / SYK-6).